A 193-amino-acid polypeptide reads, in one-letter code: Glycerol-3-phosphate acyltransferase (193 aa).

A run of 5 helical transmembrane segments spans residues 2-22, 51-71, 78-98, 112-132, and 154-174; these read AFII…AVIV, QAAF…VLIA, GVSL…PVYF, VLLG…VIVV, and IIAG…LIIW.

It belongs to the PlsY family. In terms of assembly, probably interacts with PlsX.

Its subcellular location is the cell inner membrane. It catalyses the reaction an acyl phosphate + sn-glycerol 3-phosphate = a 1-acyl-sn-glycero-3-phosphate + phosphate. Its pathway is lipid metabolism; phospholipid metabolism. In terms of biological role, catalyzes the transfer of an acyl group from acyl-phosphate (acyl-PO(4)) to glycerol-3-phosphate (G3P) to form lysophosphatidic acid (LPA). This enzyme utilizes acyl-phosphate as fatty acyl donor, but not acyl-CoA or acyl-ACP. This is Glycerol-3-phosphate acyltransferase from Coxiella burnetii (strain CbuK_Q154) (Coxiella burnetii (strain Q154)).